Here is a 292-residue protein sequence, read N- to C-terminus: Glycine--tRNA ligase alpha subunit (292 aa).

This sequence belongs to the class-II aminoacyl-tRNA synthetase family. As to quaternary structure, tetramer of two alpha and two beta subunits.

It localises to the cytoplasm. The catalysed reaction is tRNA(Gly) + glycine + ATP = glycyl-tRNA(Gly) + AMP + diphosphate. This is Glycine--tRNA ligase alpha subunit from Buchnera aphidicola subsp. Schizaphis graminum (strain Sg).